We begin with the raw amino-acid sequence, 233 residues long: Modulator of macroautophagy TMEM150B (233 aa).

Topologically, residues 1-7 are cytoplasmic; it reads MWGYLSL. A helical transmembrane segment spans residues 8–28; sequence MPVFLAVWAISGVWIVFAIAV. The Extracellular segment spans residues 29-51; the sequence is TNRTVDLSKGFPYISICGSFPPQ. Residue Asn30 is glycosylated (N-linked (GlcNAc...) asparagine). A helical transmembrane segment spans residues 52–72; that stretch reads SCIFSQVLNMGAALAAWICIV. Over 73 to 84 the chain is Cytoplasmic; the sequence is RYHQLRDWGVRR. Residues 85–105 form a helical membrane-spanning segment; the sequence is WPNQLILWTGLLCALGTSVVG. Residues 106-116 lie on the Extracellular side of the membrane; that stretch reads NFQEKNQRPTH. A helical transmembrane segment spans residues 117–137; that stretch reads LAGAFLAFILGNVYFWLQLLL. At 138–155 the chain is on the cytoplasmic side; the sequence is WRLKRLPQPGAAWIGPLR. The chain crosses the membrane as a helical span at residues 156–176; it reads LGLCSVCTILIVAMIVLHACS. At 177-185 the chain is on the extracellular side; the sequence is LRSVSAACE. A helical transmembrane segment spans residues 186–206; sequence WVVAMLLFALFGLLAVDFSAL. Topologically, residues 207–233 are cytoplasmic; the sequence is ESCTLCVQPWPSLSPPPASPISLPVQL.

The protein belongs to the DRAM/TMEM150 family. As to expression, highly expressed in the colon and lung with comparatively high levels also detectable in the lymph nodes, placenta, duodenum, peripheral blood mononuclear cells and spleen.

The protein localises to the cell membrane. Its subcellular location is the endosome membrane. The protein resides in the cytoplasmic vesicle. It is found in the autophagosome membrane. Its function is as follows. Modulator of macroautophagy that causes accumulation of autophagosomes under basal conditions and enhances autophagic flux. Represses cell death and promotes long-term clonogenic survival of cells grown in the absence of glucose in a macroautophagy-independent manner. May have some role in extracellular matrix engulfment or growth factor receptor recycling, both of which can modulate cell survival. This chain is Modulator of macroautophagy TMEM150B, found in Homo sapiens (Human).